A 315-amino-acid polypeptide reads, in one-letter code: Protein MFI (315 aa).

As to quaternary structure, can homodimerize. Interacts with MFF; the interaction inhibits MFF interaction with DNM1L. Enriched in the pancreatic beta cell and the testis and is expressed at low levels in other tissues tested.

It localises to the cytoplasm. It is found in the cytosol. Its subcellular location is the mitochondrion outer membrane. Its function is as follows. Acts as an inhibitor of mitochondrial fission. Interacts with MFF and prevents DNM1L recruitment to mitochondria, promoting a more fused mitochondrial network. This chain is Protein MFI, found in Mus musculus (Mouse).